The following is a 319-amino-acid chain: Phospho-N-acetylmuramoyl-pentapeptide-transferase (319 aa).

A run of 10 helical transmembrane segments spans residues 5–25 (LIPFISSFALTVIFLPLFIGF), 51–71 (TMGGVVFMLASVISTLWVLIW), 79–99 (TWILIIAFLGYGIIGFLDDGI), 116–136 (LGQIIIAALIIALAFSDHFAF), 149–169 (SFLFSLFVLFWLVGFSNAVNL), 172–192 (GLDGLATGLSIIAYATYAWIA), 197–217 (NWVIVAFTLSVIGGLVGFFIF), 224–244 (IFMGDAGSLALGGGLATVSIF), 252–272 (LLIGIVFVLETLSVILQVISF), and 299–319 (VDIVFWIVGLIGSIIYLIIWG).

It belongs to the glycosyltransferase 4 family. MraY subfamily. Requires Mg(2+) as cofactor.

It is found in the cell membrane. The enzyme catalyses UDP-N-acetyl-alpha-D-muramoyl-L-alanyl-gamma-D-glutamyl-L-lysyl-D-alanyl-D-alanine + di-trans,octa-cis-undecaprenyl phosphate = Mur2Ac(oyl-L-Ala-gamma-D-Glu-L-Lys-D-Ala-D-Ala)-di-trans,octa-cis-undecaprenyl diphosphate + UMP. Its pathway is cell wall biogenesis; peptidoglycan biosynthesis. Its function is as follows. Catalyzes the initial step of the lipid cycle reactions in the biosynthesis of the cell wall peptidoglycan: transfers peptidoglycan precursor phospho-MurNAc-pentapeptide from UDP-MurNAc-pentapeptide onto the lipid carrier undecaprenyl phosphate, yielding undecaprenyl-pyrophosphoryl-MurNAc-pentapeptide, known as lipid I. The polypeptide is Phospho-N-acetylmuramoyl-pentapeptide-transferase (Lactobacillus gasseri (strain ATCC 33323 / DSM 20243 / BCRC 14619 / CIP 102991 / JCM 1131 / KCTC 3163 / NCIMB 11718 / NCTC 13722 / AM63)).